The chain runs to 78 residues: Structural DNA-binding protein p10 (78 aa).

The span at 1–25 shows a compositional bias: low complexity; the sequence is MPTKAGTKSTANKKTTKGSSKSGSA. The interval 1–41 is disordered; sequence MPTKAGTKSTANKKTTKGSSKSGSARGHTGKTHAPPSMHSG.

It belongs to the asfivirus P10 family.

The protein localises to the virion. May play a role in genome packaging through direct interaction with viral DNA. Binds to ssDNA and dsDNA with the same apparent affinity in vitro. This is Structural DNA-binding protein p10 from African swine fever virus (isolate Warthog/Namibia/Wart80/1980) (ASFV).